A 349-amino-acid chain; its full sequence is UDP-N-acetylenolpyruvoylglucosamine reductase (349 aa).

Residues valine 25–glutamine 213 form the FAD-binding PCMH-type domain. The active site involves arginine 165. Serine 242 acts as the Proton donor in catalysis. Glutamate 341 is an active-site residue.

The protein belongs to the MurB family. FAD is required as a cofactor.

Its subcellular location is the cytoplasm. The catalysed reaction is UDP-N-acetyl-alpha-D-muramate + NADP(+) = UDP-N-acetyl-3-O-(1-carboxyvinyl)-alpha-D-glucosamine + NADPH + H(+). It participates in cell wall biogenesis; peptidoglycan biosynthesis. Functionally, cell wall formation. In Mycolicibacterium gilvum (strain PYR-GCK) (Mycobacterium gilvum (strain PYR-GCK)), this protein is UDP-N-acetylenolpyruvoylglucosamine reductase.